A 471-amino-acid chain; its full sequence is UDP-N-acetylmuramate--L-alanine ligase (471 aa).

ATP is bound at residue 114–120 (GTHGKTT).

It belongs to the MurCDEF family.

It localises to the cytoplasm. It catalyses the reaction UDP-N-acetyl-alpha-D-muramate + L-alanine + ATP = UDP-N-acetyl-alpha-D-muramoyl-L-alanine + ADP + phosphate + H(+). It functions in the pathway cell wall biogenesis; peptidoglycan biosynthesis. Cell wall formation. The protein is UDP-N-acetylmuramate--L-alanine ligase of Brucella abortus (strain S19).